Reading from the N-terminus, the 370-residue chain is Aspartate-semialdehyde dehydrogenase (370 aa).

Residues 10 to 13 (RGMV), 37 to 38 (TS), and Q73 contribute to the NADP(+) site. R102 lines the phosphate pocket. C135 (acyl-thioester intermediate) is an active-site residue. Q162 serves as a coordination point for substrate. Residues 165 to 166 (SG) and P193 each bind NADP(+). Residue E241 participates in substrate binding. K244 provides a ligand contact to phosphate. R268 is a binding site for substrate. The active-site Proton acceptor is the H275. Residue Q351 coordinates NADP(+).

The protein belongs to the aspartate-semialdehyde dehydrogenase family. Homodimer.

It carries out the reaction L-aspartate 4-semialdehyde + phosphate + NADP(+) = 4-phospho-L-aspartate + NADPH + H(+). Its pathway is amino-acid biosynthesis; L-lysine biosynthesis via DAP pathway; (S)-tetrahydrodipicolinate from L-aspartate: step 2/4. The protein operates within amino-acid biosynthesis; L-methionine biosynthesis via de novo pathway; L-homoserine from L-aspartate: step 2/3. It participates in amino-acid biosynthesis; L-threonine biosynthesis; L-threonine from L-aspartate: step 2/5. Functionally, catalyzes the NADPH-dependent formation of L-aspartate-semialdehyde (L-ASA) by the reductive dephosphorylation of L-aspartyl-4-phosphate. The sequence is that of Aspartate-semialdehyde dehydrogenase (asd) from Pseudomonas aeruginosa (strain ATCC 15692 / DSM 22644 / CIP 104116 / JCM 14847 / LMG 12228 / 1C / PRS 101 / PAO1).